The chain runs to 130 residues: T-cell receptor alpha chain V region PHDS58 (130 aa).

An N-terminal signal peptide occupies residues 1-20; that stretch reads MLLALLPVLGIHFVLRDAQA. The segment at 21–114 is v segment; that stretch reads QSVTQPDARV…SAVYFCAVSG (94 aa). N90 carries N-linked (GlcNAc...) asparagine glycosylation. The interval 115–130 is j segment; that stretch reads FASALTFGSGTKVIVL.

In Mus musculus (Mouse), this protein is T-cell receptor alpha chain V region PHDS58.